The following is a 539-amino-acid chain: MGSGCSSLSYSSSSTCNATVFSISSSPSSSSSLKLNPSSFLFQNPKTLRNQSPLRCGRSFKMESQKPIFDLEKLDDEFVQKLVYDALVWSSLHGLVVGDKSYQKSGNVPGVGLMHAPIALLPTAFPEAYWKQACNVTPLFNELIDRVSLDGKFLQDSLSRTKKVDVFTSRLLDIHSKMLERNKKEDIRLGLHRFDYMLDEETNSLLQIEMNTISCSFPGLSRLVSQLHQSLLRSYGDQIGIDSERVPINTSTIQFADALAKAWLEYSNPRAVVMVIVQPEERNMYDQHLLSSILREKHNIVVIRKTLAEVEKEGSVQEDETLIVGGQAVAVVYFRSGYTPNDHPSESEWNARLLIEESSAVKCPSIAYHLTGSKKIQQELAKPGVLERFLDNKEDIAKLRKCFAGLWSLDDSEIVKQAIEKPGLFVMKPQREGGGNNIYGDDVRENLLRLQKEGEEGNAAYILMQRIFPKVSNMFLVREGVYHKHQAISELGVYGAYLRSKDEVIVNEQSGYLMRTKIASSDEGGVAAGFGVLDSIYLI.

The N-terminal 61 residues, 1–61, are a transit peptide targeting the chloroplast; it reads MGSGCSSLSY…SPLRCGRSFK (61 aa). R193 contributes to the substrate binding site. E209 lines the ATP pocket. E209 and N211 together coordinate Mg(2+). Residues 213-216, 281-283, Q287, and 335-338 each bind substrate; these read ISCS, ERN, and RSGY. Residues K374, 428–437, Y439, 464–467, and E490 each bind ATP; these read KPQREGGGNN and MQRI. A Mg(2+)-binding site is contributed by E432. Residue R515 participates in substrate binding. Positions 517 and 523 each coordinate ATP. 526–527 lines the substrate pocket; that stretch reads VA.

This sequence belongs to the eukaryotic GSH synthase family. Homodimer. The cofactor is Mg(2+).

The protein localises to the plastid. It localises to the chloroplast. The enzyme catalyses gamma-L-glutamyl-L-cysteine + glycine + ATP = glutathione + ADP + phosphate + H(+). The protein operates within sulfur metabolism; glutathione biosynthesis; glutathione from L-cysteine and L-glutamate: step 2/2. The chain is Glutathione synthetase, chloroplastic (GSH2) from Arabidopsis thaliana (Mouse-ear cress).